The following is a 195-amino-acid chain: ATP-dependent Clp protease proteolytic subunit (195 aa).

The Nucleophile role is filled by serine 97. Histidine 122 is an active-site residue.

It belongs to the peptidase S14 family. Fourteen ClpP subunits assemble into 2 heptameric rings which stack back to back to give a disk-like structure with a central cavity, resembling the structure of eukaryotic proteasomes.

The protein resides in the cytoplasm. The catalysed reaction is Hydrolysis of proteins to small peptides in the presence of ATP and magnesium. alpha-casein is the usual test substrate. In the absence of ATP, only oligopeptides shorter than five residues are hydrolyzed (such as succinyl-Leu-Tyr-|-NHMec, and Leu-Tyr-Leu-|-Tyr-Trp, in which cleavage of the -Tyr-|-Leu- and -Tyr-|-Trp bonds also occurs).. Its function is as follows. Cleaves peptides in various proteins in a process that requires ATP hydrolysis. Has a chymotrypsin-like activity. Plays a major role in the degradation of misfolded proteins. The polypeptide is ATP-dependent Clp protease proteolytic subunit (Lactobacillus gasseri (strain ATCC 33323 / DSM 20243 / BCRC 14619 / CIP 102991 / JCM 1131 / KCTC 3163 / NCIMB 11718 / NCTC 13722 / AM63)).